A 324-amino-acid polypeptide reads, in one-letter code: Protein SRC2 homolog (324 aa).

The 111-residue stretch at 1-111 (MECRSLDLTI…LDQNKGDEEK (111 aa)) folds into the C2 domain. Topologically, residues 1–279 (MECRSLDLTI…KPQKPKKHGK (279 aa)) are cytoplasmic. The interval 141-281 (GSSSGPHAPV…QKPKKHGKAG (141 aa)) is disordered. Low complexity-rich tracts occupy residues 166-175 (YPPGHGAPSA) and 246-269 (PYGYPQQGYPPQGPYGYPQQQAHG). The segment covering 270–279 (KPQKPKKHGK) has biased composition (basic residues). A helical; Signal-anchor membrane pass occupies residues 280–300 (AGAGMGLGLGLGAGLLGGLLV). The Lumenal segment spans residues 301 to 324 (GEAVSDIADMGDMGDMGDMGGFDF).

In terms of assembly, interacts with RBOHF (via N-terminus).

The protein resides in the endoplasmic reticulum membrane. Its subcellular location is the protein storage vacuole membrane. It localises to the cell membrane. In terms of biological role, may act as an activator of the calcium-dependent activation of RBOHF that mediates reactive oxygen species (ROS) production and may play a role in cold responses. The protein is Protein SRC2 homolog of Arabidopsis thaliana (Mouse-ear cress).